A 260-amino-acid chain; its full sequence is MSDPITLNVGGKLYTTSLATLTSFPDSMLGAMFSGKMPTKRDSQGNCFIDRDGKVFRYILNFLRTSHLDLPEDFQEMGLLRREADFYQVQPLIEALQEKEVELSKAEKNAMLNITLNQRVQTVHFTVREAPQIYSLSSSSMEVFNANIFSTSCLFLKLLGSKLFYCSNGNLSSITSHLQDPNHLTLDWVANVEGLPEEEYTKQNLKRLWVVPANKQINSFQVFVEEVLKIALSDGFCIDSSHPHALDFMNNKIIRLIRYR.

Positions 3–72 constitute a BTB domain; the sequence is DPITLNVGGK…LRTSHLDLPE (70 aa). A coiled-coil region spans residues 88–112; that stretch reads QVQPLIEALQEKEVELSKAEKNAML.

In terms of assembly, homopentamer. Interacts with KCTD11; KCTD21 and KCTD11 may associate in pentameric assemblies. Interacts (via BTB domain) with CUL3; indicative for a participation in a BCR (BTB-CUL3-RBX1) E3 ubiquitin-protein ligase complex. As to expression, highly expressed in cerebellum and brain. Expression is down-regulated in medulloblastoma.

It functions in the pathway protein modification; protein ubiquitination. Its function is as follows. Probable substrate-specific adapter of a BCR (BTB-CUL3-RBX1) E3 ubiquitin-protein ligase complex mediating the ubiquitination and subsequent proteasomal degradation of target proteins. Promotes the ubiquitination of HDAC1. Can function as antagonist of the Hedgehog pathway by affecting the nuclear transfer of transcription factor GLI1; the function probably occurs via HDAC1 down-regulation, keeping GLI1 acetylated and inactive. Inhibits cell growth and tumorigenicity of medulloblastoma (MDB). This Homo sapiens (Human) protein is BTB/POZ domain-containing protein KCTD21 (KCTD21).